Consider the following 939-residue polypeptide: Isoleucine--tRNA ligase (939 aa).

A 'HIGH' region motif is present at residues 58-68; sequence PYANGDIHIGH. L-isoleucyl-5'-AMP is bound at residue glutamate 574. Positions 615–619 match the 'KMSKS' region motif; sequence KMSKS. Lysine 618 is a binding site for ATP. 4 residues coordinate Zn(2+): cysteine 902, cysteine 905, cysteine 922, and cysteine 925.

It belongs to the class-I aminoacyl-tRNA synthetase family. IleS type 1 subfamily. Monomer. The cofactor is Zn(2+).

The protein resides in the cytoplasm. The catalysed reaction is tRNA(Ile) + L-isoleucine + ATP = L-isoleucyl-tRNA(Ile) + AMP + diphosphate. Functionally, catalyzes the attachment of isoleucine to tRNA(Ile). As IleRS can inadvertently accommodate and process structurally similar amino acids such as valine, to avoid such errors it has two additional distinct tRNA(Ile)-dependent editing activities. One activity is designated as 'pretransfer' editing and involves the hydrolysis of activated Val-AMP. The other activity is designated 'posttransfer' editing and involves deacylation of mischarged Val-tRNA(Ile). The sequence is that of Isoleucine--tRNA ligase from Aromatoleum aromaticum (strain DSM 19018 / LMG 30748 / EbN1) (Azoarcus sp. (strain EbN1)).